The following is a 315-amino-acid chain: T cell receptor beta chain MC.7.G5 (315 aa).

Residues 1 to 21 (MTIRLLCYMGFYFLGAGLMEA) form the signal peptide. Positions 22-114 (DIYQTPRYLV…TSQYLCASSE (93 aa)) constitute an Ig-like V-type domain. Residues 22–114 (DIYQTPRYLV…TSQYLCASSE (93 aa)) form a t cell receptor beta variable 25-1 region. The cysteines at positions 42 and 110 are disulfide-linked. The segment at 46–50 (MGHDK) is CDR1. The CDR2 stretch occupies residues 68-73 (SYGVNS). The N-linked (GlcNAc...) asparagine glycan is linked to N72. Residues 110–127 (CASSEARGLAEFTDTQYF) are CDR3. The segment at 122–136 (TDTQYFGPGTRLTVL) is t cell receptor beta joining 2-3. Positions 138-315 (DLKNVFPPEV…AMVKRKDSRG (178 aa)) are t cell receptor beta constant 2. One can recognise an Ig-like C1-type domain in the interval 145–254 (PEVAVFEPSE…WTQDRAKPVT (110 aa)). An intrachain disulfide couples C167 to C232. N206 carries an N-linked (GlcNAc...) asparagine glycan. Residues 267-281 (CGFTSESYQQGVLSA) form a connecting peptide region. The helical transmembrane segment at 282-304 (TILYEILLGKATLYAVLVSALVL) threads the bilayer. Over 305 to 315 (MAMVKRKDSRG) the chain is Cytoplasmic.

Disulfide-linked heterodimer with TRAV38-2DV8*01J31*01C*01 alpha chain. The alpha-beta TR associates with the transmembrane signaling CD3 coreceptor proteins to form the TR-CD3 (TCR). The assembly of alpha-beta TR heterodimers with CD3 occurs in the endoplasmic reticulum where a single alpha-beta TR heterodimer associates with one CD3D-CD3E heterodimer, one CD3G-CD3E heterodimer and one CD247 homodimer forming a stable octameric structure. CD3D-CD3E and CD3G-CD3E heterodimers preferentially associate with TR alpha and TR beta chains (via TM domain), respectively. The association of the CD247 homodimer is the last step of TCR assembly in the endoplasmic reticulum and is required for transport to the cell surface. In terms of tissue distribution, expressed in MR1-restricted CD8-positive T cells.

It localises to the cell membrane. Functionally, the beta chain of TRAV38-2DV8*01J31*01C*01/TRBV25-1*01J2S3*01C2*01 alpha-beta T cell receptor (TR) clonotype that displays pan-cancer cell recognition via the invariant MR1 molecule. On CD8-positive T cell clone MC.7.G5, likely recognizes tumor-specific or -associated metabolite(s) essential for cancer cell survival, triggering killing of many cancer cell types including lung, melanoma, leukemia, colon, breast, prostate, bone and ovarian cancer cells. Mediates cancer cell cytotoxicity in an HLA-independent manner. Has no reactivity to healthy cells even stressed or infected by bacteria. Antigen recognition initiates TR-CD3 clustering on the cell surface and intracellular activation of LCK that phosphorylates the ITAM motifs of CD3G, CD3D, CD3E and CD247 enabling the recruitment of ZAP70. In turn, ZAP70 phosphorylates LAT, which recruits numerous signaling molecules to form the LAT signalosome. The LAT signalosome propagates signal branching to three major signaling pathways, the calcium, the mitogen-activated protein kinase (MAPK) kinase and the nuclear factor NF-kappa-B (NF-kB) pathways, leading to the mobilization of transcription factors that are critical for gene expression and essential for T cell differentiation into effector/memory T cells. The polypeptide is T cell receptor beta chain MC.7.G5 (Homo sapiens (Human)).